A 637-amino-acid chain; its full sequence is Pyrethroid hydrolase (637 aa).

It catalyses the reaction (-)-trans-permethrin + H2O = (3-phenoxyphenyl)methanol + (1S,3R)-3-(2,2-dichlorovinyl)-2,2-dimethylcyclopropanecarboxylate + H(+). Its activity is regulated as follows. Inhibited by Hg(2+), Ag(+) and rho-chloromercuribenzoate. Catalyzes the hydrolysis of pyrethroids pesticides. Hydrolyzes cis-permethrin at approximately equal rate to trans-permethrin. In Klebsiella sp, this protein is Pyrethroid hydrolase (estP).